A 701-amino-acid polypeptide reads, in one-letter code: Polyribonucleotide nucleotidyltransferase (701 aa).

Aspartate 487 and aspartate 493 together coordinate Mg(2+). Positions proline 554–valine 613 constitute a KH domain. In terms of domain architecture, S1 motif spans glycine 623–lysine 691.

This sequence belongs to the polyribonucleotide nucleotidyltransferase family. In terms of assembly, component of the RNA degradosome, which is a multiprotein complex involved in RNA processing and mRNA degradation. Mg(2+) is required as a cofactor.

Its subcellular location is the cytoplasm. It catalyses the reaction RNA(n+1) + phosphate = RNA(n) + a ribonucleoside 5'-diphosphate. Functionally, involved in mRNA degradation. Catalyzes the phosphorolysis of single-stranded polyribonucleotides processively in the 3'- to 5'-direction. This Pseudomonas syringae pv. syringae (strain B728a) protein is Polyribonucleotide nucleotidyltransferase.